The chain runs to 215 residues: Cytidylate kinase (215 aa).

ATP is bound at residue 11-19 (GPTASGKGT).

It belongs to the cytidylate kinase family. Type 1 subfamily.

The protein localises to the cytoplasm. It carries out the reaction CMP + ATP = CDP + ADP. It catalyses the reaction dCMP + ATP = dCDP + ADP. The polypeptide is Cytidylate kinase (Polynucleobacter necessarius subsp. necessarius (strain STIR1)).